Reading from the N-terminus, the 724-residue chain is Pediocin PA-1 transport/processing ATP-binding protein PedD (724 aa).

The region spanning 13–140 (QVDENDCGLA…KEWTQIAIII (128 aa)) is the Peptidase C39 domain. Cys-19 is a catalytic residue. The next 6 membrane-spanning stretches (helical) occupy residues 170-190 (IGLI…GAYF), 207-227 (LSLV…INYI), 284-304 (TTLT…FLAY), 307-327 (INLF…VWLF), 396-416 (IKAA…TFFV), and 426-446 (LLTY…IINL). In terms of domain architecture, ABC transmembrane type-1 spans 170 to 452 (IGLIITAAAI…IINLQPKLQA (283 aa)). An ABC transporter domain is found at 486-722 (IEVNHVSFNY…NGYYARLIHN (237 aa)). 519 to 526 (GMSGSGKT) is a binding site for ATP.

It belongs to the ABC transporter superfamily. Pediocin PA-1 exporter (TC 3.A.1.112.2) family.

Its subcellular location is the cell membrane. Its function is as follows. Involved in the export process of the bacteriocin pediocin PA-1/AcH. Is also essential for pediocin production. This chain is Pediocin PA-1 transport/processing ATP-binding protein PedD (pedD), found in Pediococcus acidilactici.